A 43-amino-acid chain; its full sequence is Protein PsbN (43 aa).

Residues 7 to 27 (VAIFISCLLVSFTGYALYTAF) traverse the membrane as a helical segment.

It belongs to the PsbN family.

Its subcellular location is the plastid. The protein resides in the chloroplast thylakoid membrane. Functionally, may play a role in photosystem I and II biogenesis. The polypeptide is Protein PsbN (Huperzia lucidula (Shining clubmoss)).